We begin with the raw amino-acid sequence, 637 residues long: tRNA 5-methylaminomethyl-2-thiouridine biosynthesis bifunctional protein MnmC (637 aa).

The segment at 1-232 (MPERIEWLED…KRDNLQGEFN (232 aa)) is tRNA (mnm(5)s(2)U34)-methyltransferase. Positions 255 to 637 (IGAGLAGAAV…YGEAKLVSED (383 aa)) are FAD-dependent cmnm(5)s(2)U34 oxidoreductase.

The protein in the N-terminal section; belongs to the methyltransferase superfamily. tRNA (mnm(5)s(2)U34)-methyltransferase family. This sequence in the C-terminal section; belongs to the DAO family. Requires FAD as cofactor.

The protein resides in the cytoplasm. The catalysed reaction is 5-aminomethyl-2-thiouridine(34) in tRNA + S-adenosyl-L-methionine = 5-methylaminomethyl-2-thiouridine(34) in tRNA + S-adenosyl-L-homocysteine + H(+). Functionally, catalyzes the last two steps in the biosynthesis of 5-methylaminomethyl-2-thiouridine (mnm(5)s(2)U) at the wobble position (U34) in tRNA. Catalyzes the FAD-dependent demodification of cmnm(5)s(2)U34 to nm(5)s(2)U34, followed by the transfer of a methyl group from S-adenosyl-L-methionine to nm(5)s(2)U34, to form mnm(5)s(2)U34. In Polaromonas sp. (strain JS666 / ATCC BAA-500), this protein is tRNA 5-methylaminomethyl-2-thiouridine biosynthesis bifunctional protein MnmC.